The primary structure comprises 37 residues: Large ribosomal subunit protein bL36c (37 aa).

Belongs to the bacterial ribosomal protein bL36 family.

It is found in the plastid. Its subcellular location is the chloroplast. The polypeptide is Large ribosomal subunit protein bL36c (Pinus koraiensis (Korean pine)).